Reading from the N-terminus, the 266-residue chain is Glucose 1-dehydrogenase (266 aa).

NADP(+) is bound at residue L15–A39. Residue S149 coordinates substrate. The Proton acceptor role is filled by Y162.

Belongs to the short-chain dehydrogenases/reductases (SDR) family. Homotetramer or homooctamer.

It catalyses the reaction D-glucose + NADP(+) = D-glucono-1,5-lactone + NADPH + H(+). In terms of biological role, oxidizes both D-glucose and D-mannose, but is 15 times more catalytically efficient with mannose. Strictly dependent on NADP. In Gluconobacter oxydans (strain 621H) (Gluconobacter suboxydans), this protein is Glucose 1-dehydrogenase.